The primary structure comprises 260 residues: Adenosine 5'-phosphosulfate reductase (260 aa).

C130, C131, C213, and C216 together coordinate [4Fe-4S] cluster. Residue C241 is the Nucleophile; cysteine thiosulfonate intermediate of the active site.

Belongs to the PAPS reductase family. CysH subfamily. [4Fe-4S] cluster serves as cofactor.

The protein resides in the cytoplasm. It catalyses the reaction [thioredoxin]-disulfide + sulfite + AMP + 2 H(+) = adenosine 5'-phosphosulfate + [thioredoxin]-dithiol. The protein operates within sulfur metabolism; hydrogen sulfide biosynthesis; sulfite from sulfate. Functionally, catalyzes the formation of sulfite from adenosine 5'-phosphosulfate (APS) using thioredoxin as an electron donor. The sequence is that of Adenosine 5'-phosphosulfate reductase from Agrobacterium fabrum (strain C58 / ATCC 33970) (Agrobacterium tumefaciens (strain C58)).